The sequence spans 302 residues: Proline dehydrogenase 1 (302 aa).

K95 is a substrate binding site. D129 is an active-site residue. FAD-binding residues include M130 and Q158. R179 is an active-site residue. Residues 182–184 (KGA) and 221–222 (TH) each bind FAD. Position 283–284 (283–284 (RR)) interacts with substrate.

The protein belongs to the proline dehydrogenase family. Requires FAD as cofactor.

The catalysed reaction is L-proline + a quinone = (S)-1-pyrroline-5-carboxylate + a quinol + H(+). The protein operates within amino-acid degradation; L-proline degradation into L-glutamate; L-glutamate from L-proline: step 1/2. Functionally, converts proline to delta-1-pyrroline-5-carboxylate. The polypeptide is Proline dehydrogenase 1 (fadM) (Bacillus subtilis (strain 168)).